Here is a 294-residue protein sequence, read N- to C-terminus: Protein huluwa (294 aa).

Residues 1–23 (MSQLGSAVPSSNLPEGLPVSSLA) lie on the Extracellular side of the membrane. A helical transmembrane segment spans residues 24 to 44 (LLILVLIPCVLLLLLLNCLFV). At 45–294 (GYKLFRMTRR…PPITTKQYWV (250 aa)) the chain is on the cytoplasmic side. Positions 154 to 175 (SDSDMERVNTVPPNSPVLRVTP) are disordered. A VPPNSP motif motif is present at residues 164–169 (VPPNSP). Residues 184–190 (SLRRSST) carry the SLRRSST motif motif.

This sequence belongs to the huluwa family. Interacts with axin1; leading to promote the tankyrase-mediated degradation of axin. Interacts with axin2; leading to promote the tankyrase-mediated degradation of axin.

It is found in the cell membrane. In terms of biological role, key maternal determinant of the dorsal organizer and body axis formation in vertebrates that acts by promoting stabilization of beta-catenin (ctnnb1). Localizes on the plasma membrane of the future dorsal blastomeres in early blastulas and binds to and promotes the tankyrase-mediated degradation of axin (axin1 and axin2). Axin degradation results in stabilization and nuclear translocation of beta-catenin (ctnnb1) for activating organizer-specific target gene expression. The sequence is that of Protein huluwa from Danio rerio (Zebrafish).